A 99-amino-acid polypeptide reads, in one-letter code: Malonate decarboxylase acyl carrier protein (99 aa).

Ser-25 is subject to O-(phosphoribosyl dephospho-coenzyme A)serine.

It belongs to the MdcC family. Covalently binds the prosthetic group of malonate decarboxylase.

The protein localises to the cytoplasm. In terms of biological role, subunit of malonate decarboxylase, it is an acyl carrier protein to which acetyl and malonyl thioester residues are bound via a 2'-(5''-phosphoribosyl)-3'-dephospho-CoA prosthetic group and turn over during the catalytic mechanism. The protein is Malonate decarboxylase acyl carrier protein of Pseudomonas aeruginosa (strain UCBPP-PA14).